A 56-amino-acid polypeptide reads, in one-letter code: Large ribosomal subunit protein bL32 (56 aa).

The interval 1 to 21 (MAVQQNRKTRSRRGMRRSHDA) is disordered. Basic residues predominate over residues 7–16 (RKTRSRRGMR).

It belongs to the bacterial ribosomal protein bL32 family.

The sequence is that of Large ribosomal subunit protein bL32 from Vibrio cholerae serotype O1 (strain ATCC 39541 / Classical Ogawa 395 / O395).